The following is a 292-amino-acid chain: NAD kinase (292 aa).

The Proton acceptor role is filled by D73. NAD(+) is bound by residues D73–G74, N147–E148, H158, R175, D177, T188–S193, and Q247.

Belongs to the NAD kinase family. A divalent metal cation is required as a cofactor.

Its subcellular location is the cytoplasm. It catalyses the reaction NAD(+) + ATP = ADP + NADP(+) + H(+). Its function is as follows. Involved in the regulation of the intracellular balance of NAD and NADP, and is a key enzyme in the biosynthesis of NADP. Catalyzes specifically the phosphorylation on 2'-hydroxyl of the adenosine moiety of NAD to yield NADP. This is NAD kinase from Buchnera aphidicola subsp. Schizaphis graminum (strain Sg).